We begin with the raw amino-acid sequence, 323 residues long: MDLNTILIILGIIALIILVVHGLWANRREKSQYFKSANTFTRDSRLREPPAHIQSASEEKKDANTSTPTAEVSPAQRTFAFEAEKQFAHEQQAVEQAIENIKITLPKEEQPYQAKIEPDTPPTSPALTTIAEVENYANQEEGIDTHSEQLRQQLADLAQQSPSVTLAALQEEQALMESQAQQQASEDVRQDTDATFIMMYVVAPENYQFQGARLAKILDELGFLFGEHNIYHRHSDLSVNSPVLFSVANIEQPGTFDYNMHDFSTVGIALFMQLPSEGNDLMNLRMMIRAAKSIAEDLGGFVLTDQQAIFDDQAEKAYLDKVR.

The Periplasmic portion of the chain corresponds to 1 to 4; that stretch reads MDLN. A helical transmembrane segment spans residues 5-25; it reads TILIILGIIALIILVVHGLWA. Topologically, residues 26-323 are cytoplasmic; that stretch reads NRREKSQYFK…AEKAYLDKVR (298 aa). Positions 44–73 are disordered; it reads SRLREPPAHIQSASEEKKDANTSTPTAEVS.

The protein belongs to the ZipA family. Interacts with FtsZ via their C-terminal domains.

The protein resides in the cell inner membrane. In terms of biological role, essential cell division protein that stabilizes the FtsZ protofilaments by cross-linking them and that serves as a cytoplasmic membrane anchor for the Z ring. Also required for the recruitment to the septal ring of downstream cell division proteins. The protein is Cell division protein ZipA of Pasteurella multocida (strain Pm70).